A 390-amino-acid chain; its full sequence is Chorismate synthase (390 aa).

NADP(+) is bound by residues Arg-39 and Arg-45. FMN-binding positions include 132–134 (RSS), 253–254 (NA), Gly-298, 313–317 (KPIPT), and Arg-339.

It belongs to the chorismate synthase family. Homotetramer. FMNH2 is required as a cofactor.

It catalyses the reaction 5-O-(1-carboxyvinyl)-3-phosphoshikimate = chorismate + phosphate. It participates in metabolic intermediate biosynthesis; chorismate biosynthesis; chorismate from D-erythrose 4-phosphate and phosphoenolpyruvate: step 7/7. Functionally, catalyzes the anti-1,4-elimination of the C-3 phosphate and the C-6 proR hydrogen from 5-enolpyruvylshikimate-3-phosphate (EPSP) to yield chorismate, which is the branch point compound that serves as the starting substrate for the three terminal pathways of aromatic amino acid biosynthesis. This reaction introduces a second double bond into the aromatic ring system. The chain is Chorismate synthase from Shouchella clausii (strain KSM-K16) (Alkalihalobacillus clausii).